A 67-amino-acid polypeptide reads, in one-letter code: GVRDGYIAQPHNCVYHCFPGSGGCDTLCKENGATQGSSCFILGRGTACWCKDLPDRVGVIVDGEKCH.

In terms of domain architecture, LCN-type CS-alpha/beta spans 3–67; it reads RDGYIAQPHN…GVIVDGEKCH (65 aa). Cystine bridges form between C13/C66, C17/C39, C24/C48, and C28/C50.

The protein belongs to the long (4 C-C) scorpion toxin superfamily. Sodium channel inhibitor family. Alpha subfamily. In terms of tissue distribution, expressed by the venom gland.

The protein localises to the secreted. Functionally, binds to sodium channels (Nav) and inhibits the inactivation of the activated channels, thereby blocking neuronal transmission. This chain is Neurotoxin Os3, found in Orthochirus scrobiculosus (Central Asian scorpion).